Consider the following 470-residue polypeptide: Heparan-sulfate 6-O-sulfotransferase 3 (470 aa).

Residues 1 to 4 lie on the Cytoplasmic side of the membrane; sequence MDER. The chain crosses the membrane as a helical; Signal-anchor for type II membrane protein span at residues 5-27; sequence FNKWLLTPVLTLLFVVIMYQYVS. At 28 to 470 the chain is on the lumenal side; sequence PSCTSSCTNF…EDYNSQVVRW (443 aa). The tract at residues 36–121 is disordered; it reads NFGEQLRSGE…EAPENGSLPR (86 aa). Acidic residues predominate over residues 88-113; the sequence is PEDEDEDPGDPEEEEEEEEEEPDPEA. N-linked (GlcNAc...) asparagine glycans are attached at residues Asn116 and Asn127. 3'-phosphoadenylyl sulfate is bound at residue 151–159; it reads HIQKTGGTT. Substrate-binding positions include 181–182, Arg198, Trp203, and His208; that span reads KK. The active-site Proton acceptor is His208. N-linked (GlcNAc...) asparagine glycosylation occurs at Asn230. Arg244 and Ser252 together coordinate 3'-phosphoadenylyl sulfate. Substrate-binding residues include His256 and Trp263. 2 N-linked (GlcNAc...) asparagine glycosylation sites follow: Asn323 and Asn328. 376-378 is a binding site for 3'-phosphoadenylyl sulfate; it reads TQF. A glycan (N-linked (GlcNAc...) asparagine) is linked at Asn379. 382–383 contributes to the 3'-phosphoadenylyl sulfate binding site; that stretch reads RA. The disordered stretch occupies residues 421–453; that stretch reads TKQLEHQRDRQKRREERRLQREHRAHRWPKEDR. A compositionally biased stretch (basic and acidic residues) spans 422–439; it reads KQLEHQRDRQKRREERRL.

Belongs to the sulfotransferase 6 family. As to expression, ubiquitously expressed.

The protein resides in the membrane. It catalyses the reaction alpha-D-glucosaminyl-[heparan sulfate](n) + 3'-phosphoadenylyl sulfate = 6-sulfo-alpha-D-glucosaminyl-[heparan sulfate](n) + adenosine 3',5'-bisphosphate + H(+). 6-O-sulfation enzyme which catalyzes the transfer of sulfate from 3'-phosphoadenosine 5'-phosphosulfate (PAPS) to position 6 of the N-sulfoglucosamine residue (GlcNS) of heparan sulfate. The sequence is that of Heparan-sulfate 6-O-sulfotransferase 3 (Hs6st3) from Mus musculus (Mouse).